Consider the following 376-residue polypeptide: N-acetyldiaminopimelate deacetylase (376 aa).

Residue Asp70 is part of the active site. The Proton acceptor role is filled by Glu129.

It belongs to the peptidase M20A family. N-acetyldiaminopimelate deacetylase subfamily.

The catalysed reaction is N-acetyl-(2S,6S)-2,6-diaminopimelate + H2O = (2S,6S)-2,6-diaminopimelate + acetate. It functions in the pathway amino-acid biosynthesis; L-lysine biosynthesis via DAP pathway; LL-2,6-diaminopimelate from (S)-tetrahydrodipicolinate (acetylase route): step 3/3. In terms of biological role, catalyzes the conversion of N-acetyl-diaminopimelate to diaminopimelate and acetate. In Geobacillus sp. (strain WCH70), this protein is N-acetyldiaminopimelate deacetylase.